Reading from the N-terminus, the 301-residue chain is Glutamine amidotransferase-like protein GlxB (301 aa).

Cys2 is a catalytic residue. The Glutamine amidotransferase type-2 domain maps to Cys2–Gln298.

In Rhizobium meliloti (strain 1021) (Ensifer meliloti), this protein is Glutamine amidotransferase-like protein GlxB (glxB).